The following is an 863-amino-acid chain: MLFPLSLSSPLTPSAVKIERENLKQFELENFSRYSIFELVENRSDFYDALLIQLWQEMGLSEQLGISLIAVGGYGRREMFPLSDLDFLILVEQTPIPEIEEKITQFIQFLWDCGFEVGHSVRTLQQCESEGKQDITIATNLLEARFLIGNRPHFDALNELVKRADFWSKEGFFNAKVQEQIERYQRYHNTAYNLEPDIKYSPGGLRDLHLLYWVALHHSGAQTLEDILQSGFIYPQEYQQLQESRAFLFKVRFALHLILTRYDNRLLFDRQIKVSELLGFRGEGNQAVEKMMKCFFQALHRISLISNLLIQHYRENVLSSNQATVIEQLDDDFQLINQCLCLRNSLVFQEKPARILDLFFYLTQYEQANIHSDTLRQLQISLEQLPQKLCEIPEAREKFLRLFNQPNSIKRAFMPMHQYGVLTAYLPQWQAIEGLMQFDLFHIYTVDEHTLRVMLKLESFLSQESAQEHPIAHRIFSQLSDRTLLYIAALFHDIAKGRGGDHAELGAKDVANFARLHGLDRREIDTLAWLVQSHLLMSITAQRRDIHDPEVVMNFAEAVQNQVRLDYLTCLTVADICATNGNLWNSWKRSLFASLYEFTEQQFAQGMKELLDYSEKSAENRKLAQQILTQDYSDIMPISIDQLWERCPEDYFVRNTPKQIAWHTSLLVDLVEALLVKISNRFSLGGTEVFIYCQDQPHLFNKVVSTIGAKKFSIHDAQIITTQDGYVFDSFIITELNGELVEFDRRRELEQALTLALQSEKLSALSITPNRQLQHFTVQTDVRFLHENKKEHTEMELVALDKAGLLAQVSQIFSELNLNLLNAKITTVGEKAEDFFILTNQFGQALDSQQREILRNVLYRNIG.

The uridylyltransferase stretch occupies residues 1–328 (MLFPLSLSSP…SSNQATVIEQ (328 aa)). The segment at 329-687 (LDDDFQLINQ…ISNRFSLGGT (359 aa)) is uridylyl-removing. An HD domain is found at 446-568 (VDEHTLRVML…VQNQVRLDYL (123 aa)). 2 consecutive ACT domains span residues 688 to 772 (EVFI…PNRQ) and 794 to 863 (EMEL…RNIG).

It belongs to the GlnD family. The cofactor is Mg(2+).

It catalyses the reaction [protein-PII]-L-tyrosine + UTP = [protein-PII]-uridylyl-L-tyrosine + diphosphate. The catalysed reaction is [protein-PII]-uridylyl-L-tyrosine + H2O = [protein-PII]-L-tyrosine + UMP + H(+). With respect to regulation, uridylyltransferase (UTase) activity is inhibited by glutamine, while glutamine activates uridylyl-removing (UR) activity. Its function is as follows. Modifies, by uridylylation and deuridylylation, the PII regulatory proteins (GlnB and homologs), in response to the nitrogen status of the cell that GlnD senses through the glutamine level. Under low glutamine levels, catalyzes the conversion of the PII proteins and UTP to PII-UMP and PPi, while under higher glutamine levels, GlnD hydrolyzes PII-UMP to PII and UMP (deuridylylation). Thus, controls uridylylation state and activity of the PII proteins, and plays an important role in the regulation of nitrogen assimilation and metabolism. The sequence is that of Bifunctional uridylyltransferase/uridylyl-removing enzyme from Haemophilus influenzae (strain PittEE).